The following is a 249-amino-acid chain: Pyridoxine 5'-phosphate synthase (249 aa).

Position 7 (Asn-7) interacts with 3-amino-2-oxopropyl phosphate. 9 to 10 (DH) is a 1-deoxy-D-xylulose 5-phosphate binding site. Arg-18 serves as a coordination point for 3-amino-2-oxopropyl phosphate. The active-site Proton acceptor is the His-43. 1-deoxy-D-xylulose 5-phosphate-binding residues include Arg-45 and His-50. Catalysis depends on Glu-70, which acts as the Proton acceptor. Thr-100 contributes to the 1-deoxy-D-xylulose 5-phosphate binding site. His-190 acts as the Proton donor in catalysis. 3-amino-2-oxopropyl phosphate contacts are provided by residues Gly-191 and 212–213 (GH).

It belongs to the PNP synthase family. Homooctamer; tetramer of dimers.

Its subcellular location is the cytoplasm. It catalyses the reaction 3-amino-2-oxopropyl phosphate + 1-deoxy-D-xylulose 5-phosphate = pyridoxine 5'-phosphate + phosphate + 2 H2O + H(+). Its pathway is cofactor biosynthesis; pyridoxine 5'-phosphate biosynthesis; pyridoxine 5'-phosphate from D-erythrose 4-phosphate: step 5/5. Its function is as follows. Catalyzes the complicated ring closure reaction between the two acyclic compounds 1-deoxy-D-xylulose-5-phosphate (DXP) and 3-amino-2-oxopropyl phosphate (1-amino-acetone-3-phosphate or AAP) to form pyridoxine 5'-phosphate (PNP) and inorganic phosphate. The polypeptide is Pyridoxine 5'-phosphate synthase (Synechococcus sp. (strain CC9311)).